We begin with the raw amino-acid sequence, 667 residues long: Trifunctional UDP-glucose 4,6-dehydratase/UDP-4-keto-6-deoxy-D-glucose 3,5-epimerase/UDP-4-keto-L-rhamnose-reductase RHM2 (667 aa).

15–21 serves as a coordination point for NAD(+); that stretch reads GAAGFIA. Thr-134 is a substrate binding site. The Proton donor role is filled by Asp-135. Active-site proton acceptor residues include Glu-136 and Tyr-161. 389–395 contributes to the NADP(+) binding site; it reads GKTGWLG.

In the N-terminal section; belongs to the NAD(P)-dependent epimerase/dehydratase family. dTDP-glucose dehydratase subfamily. This sequence in the C-terminal section; belongs to the dTDP-4-dehydrorhamnose reductase family. NAD(+) is required as a cofactor. NADP(+) serves as cofactor. In terms of tissue distribution, expressed in roots, stems, leaves, seedlings, inflorescence tips, and siliques.

It carries out the reaction UDP-alpha-D-glucose = UDP-4-dehydro-6-deoxy-alpha-D-glucose + H2O. It participates in carbohydrate biosynthesis. Functionally, trifunctional enzyme involved in UDP-beta-L-rhamnose biosynthesis, a precursor of the primary cell wall components rhamnogalacturonan I (RG-I) and rhamnogalacturonan II (RG-II). Catalyzes the dehydration of UDP-glucose to form UDP-4-dehydro-6-deoxy-D-glucose followed by the epimerization of the C3' and C5' positions of UDP-4-dehydro-6-deoxy-D-glucose to form UDP-4-keto-beta-L-rhamnose and the reduction of UDP-4-keto-beta-L-rhamnose to yield UDP-beta-L-rhamnose. Required for the normal seed coat epidermal development. This is Trifunctional UDP-glucose 4,6-dehydratase/UDP-4-keto-6-deoxy-D-glucose 3,5-epimerase/UDP-4-keto-L-rhamnose-reductase RHM2 from Arabidopsis thaliana (Mouse-ear cress).